Consider the following 147-residue polypeptide: Hemoglobin subunit epsilon-M (147 aa).

The 145-residue stretch at 3 to 147 folds into the Globin domain; that stretch reads HFTPEDKTNI…VSSALGHKYH (145 aa). Phosphoserine is present on residues Ser14 and Ser51. Positions 64 and 93 each coordinate heme b.

It belongs to the globin family. As to expression, red blood cells.

In terms of biological role, hemoglobin epsilon chain is a beta-type chain found in early embryos. This is Hemoglobin subunit epsilon-M (HBE1) from Didelphis virginiana (North American opossum).